Consider the following 437-residue polypeptide: O-acetyl-L-homoserine sulfhydrylase (437 aa).

Lys216 bears the N6-(pyridoxal phosphate)lysine mark.

It belongs to the trans-sulfuration enzymes family. Homohexamer. The cofactor is pyridoxal 5'-phosphate.

The enzyme catalyses O-acetyl-L-homoserine + hydrogen sulfide = L-homocysteine + acetate. It catalyses the reaction O-acetyl-L-homoserine + methanethiol = L-methionine + acetate + H(+). The protein operates within amino-acid biosynthesis; L-methionine biosynthesis via de novo pathway; L-homocysteine from O-acetyl-L-homoserine: step 1/1. Its activity is regulated as follows. Inhibited by methionine and cystathionine. In terms of biological role, catalyzes the conversion of O-acetyl-L-homoserine (OAH) into homocysteine in the methionine biosynthesis pathway. Can also use dimethyldisulfide and methanethiol as reduced sulfur sources, leading to the direct formation of methionine. Has weak cystathionine gamma-synthase activity. The protein is O-acetyl-L-homoserine sulfhydrylase of Corynebacterium glutamicum (strain ATCC 13032 / DSM 20300 / JCM 1318 / BCRC 11384 / CCUG 27702 / LMG 3730 / NBRC 12168 / NCIMB 10025 / NRRL B-2784 / 534).